A 457-amino-acid chain; its full sequence is Ribulose bisphosphate carboxylase-like protein (457 aa).

Residues Lys-199, Asp-201, and Glu-202 each contribute to the Mg(2+) site. Position 199 is an N6-carboxylysine (Lys-199). The segment at 426 to 457 is disordered; sequence AIAAFGKPAHGQAASPQPSEQASEPDAAGGDS.

It belongs to the RuBisCO large chain family. Type IV subfamily. Mg(2+) serves as cofactor.

Its function is as follows. May be involved in sulfur metabolism and oxidative stress response. Does not show RuBisCO activity. The protein is Ribulose bisphosphate carboxylase-like protein of Allochromatium vinosum (strain ATCC 17899 / DSM 180 / NBRC 103801 / NCIMB 10441 / D) (Chromatium vinosum).